The sequence spans 432 residues: Enolase (432 aa).

(2R)-2-phosphoglycerate is bound at residue Gln-167. The Proton donor role is filled by Glu-209. The Mg(2+) site is built by Asp-246, Glu-290, and Asp-317. (2R)-2-phosphoglycerate-binding residues include Lys-342, Arg-371, Ser-372, and Lys-393. Lys-342 functions as the Proton acceptor in the catalytic mechanism.

The protein belongs to the enolase family. Component of the RNA degradosome, a multiprotein complex involved in RNA processing and mRNA degradation. The cofactor is Mg(2+).

The protein localises to the cytoplasm. Its subcellular location is the secreted. It is found in the cell surface. The catalysed reaction is (2R)-2-phosphoglycerate = phosphoenolpyruvate + H2O. It functions in the pathway carbohydrate degradation; glycolysis; pyruvate from D-glyceraldehyde 3-phosphate: step 4/5. Catalyzes the reversible conversion of 2-phosphoglycerate (2-PG) into phosphoenolpyruvate (PEP). It is essential for the degradation of carbohydrates via glycolysis. The sequence is that of Enolase from Shigella sonnei (strain Ss046).